The primary structure comprises 151 residues: Ribosome maturation factor RimP (151 aa).

It belongs to the RimP family.

It is found in the cytoplasm. Its function is as follows. Required for maturation of 30S ribosomal subunits. The protein is Ribosome maturation factor RimP of Caldanaerobacter subterraneus subsp. tengcongensis (strain DSM 15242 / JCM 11007 / NBRC 100824 / MB4) (Thermoanaerobacter tengcongensis).